The sequence spans 276 residues: NADH-cytochrome b5 reductase 2 (276 aa).

One can recognise an FAD-binding FR-type domain in the interval 15 to 127; the sequence is EAKYPLPLIE…RGPRGRLFYH (113 aa). Lys-17 bears the N6-acetyllysine mark. Phosphotyrosine is present on Tyr-18. FAD-binding positions include 107–137 and 146–181; these read ENMK…IRPD and LADH…RMSL.

It belongs to the flavoprotein pyridine nucleotide cytochrome reductase family. It depends on FAD as a cofactor. As to expression, restricted expression.

The catalysed reaction is 2 Fe(III)-[cytochrome b5] + NADH = 2 Fe(II)-[cytochrome b5] + NAD(+) + H(+). Functionally, NADH-cytochrome b5 reductases are involved in desaturation and elongation of fatty acids, cholesterol biosynthesis, drug metabolism, and, in erythrocyte, methemoglobin reduction. Responsible for NADH-dependent lucigenin chemiluminescence in spermatozoa by reducing both lucigenin and 2-[4-iodophenyl]-3-[4-nitrophenyl]-5-[2,4-disulfophenyl]-2H tetrazolium monosodium salt (WST-1). The chain is NADH-cytochrome b5 reductase 2 from Homo sapiens (Human).